Consider the following 96-residue polypeptide: UPF0298 protein LCA_1075 (96 aa).

The protein belongs to the UPF0298 family.

It is found in the cytoplasm. The sequence is that of UPF0298 protein LCA_1075 from Latilactobacillus sakei subsp. sakei (strain 23K) (Lactobacillus sakei subsp. sakei).